Consider the following 156-residue polypeptide: Ribosomal RNA large subunit methyltransferase H (156 aa).

S-adenosyl-L-methionine is bound by residues Leu-73, Gly-104, and 123 to 128; that span reads VSSLTL.

This sequence belongs to the RNA methyltransferase RlmH family. In terms of assembly, homodimer.

Its subcellular location is the cytoplasm. It catalyses the reaction pseudouridine(1915) in 23S rRNA + S-adenosyl-L-methionine = N(3)-methylpseudouridine(1915) in 23S rRNA + S-adenosyl-L-homocysteine + H(+). Specifically methylates the pseudouridine at position 1915 (m3Psi1915) in 23S rRNA. The polypeptide is Ribosomal RNA large subunit methyltransferase H (Burkholderia thailandensis (strain ATCC 700388 / DSM 13276 / CCUG 48851 / CIP 106301 / E264)).